Reading from the N-terminus, the 945-residue chain is 26S proteasome regulatory subunit RPN2 (945 aa).

The residue at position 2 (Ser2) is an N-acetylserine. 10 PC repeats span residues 366–399 (TATASLGVIHKGNLLEGKKVMAPYLPGSRASSRF), 403–440 (GSLYGLGLIYAGFGRDTTDYLKNIIVENSGTSGDEDVD), 445–479 (GASLGIGLAAMGSANIEVYEALKEVLYNDSATSGE), 480–514 (AAALGMGLCMLGTGKPEAIHDMFTYSQETQHGNIT), 516–549 (GLAVGLALINYGRQELADDLITKMLASDESLLRY), 550–585 (GGAFTIALAYAGTGNNSAVKRLLHVAVSDSNDDVRR), 586–618 (AAVIALGFVLLRDYTTVPRIVQLLSKSHNAHVR), 620–654 (GTAFALGIACAGKGLQSAIDVLDPLTKDPVDFVRQ), 655–692 (AAMIALSMILIQQTEKLNPQVADINKNFLSVITNKHQE), and 698–734 (GACVAQGIMNAGGRNVTIQLENADTGTLDTKSVVGLV). Residue Thr801 is modified to Phosphothreonine. Residues 810-819 (AKARAKKTKK) show a composition bias toward basic residues. The disordered stretch occupies residues 810–851 (AKARAKKTKKEKGPNEEEKKKEHEEKEKERETNKKGIKETKE). Residues 820-851 (EKGPNEEEKKKEHEEKEKERETNKKGIKETKE) show a composition bias toward basic and acidic residues. Thr932 carries the post-translational modification Phosphothreonine.

This sequence belongs to the proteasome subunit S1 family. As to quaternary structure, interacts with UBR1. In terms of processing, N-acetylated by NAT1.

In terms of biological role, acts as a regulatory subunit of the 26S proteasome which is involved in the ATP-dependent degradation of ubiquitinated proteins. The chain is 26S proteasome regulatory subunit RPN2 (RPN2) from Saccharomyces cerevisiae (strain ATCC 204508 / S288c) (Baker's yeast).